The primary structure comprises 193 residues: Potassium-transporting ATPase KdpC subunit (193 aa).

Residues isoleucine 14–alanine 34 form a helical membrane-spanning segment.

The protein belongs to the KdpC family. The system is composed of three essential subunits: KdpA, KdpB and KdpC.

It is found in the cell membrane. Part of the high-affinity ATP-driven potassium transport (or Kdp) system, which catalyzes the hydrolysis of ATP coupled with the electrogenic transport of potassium into the cytoplasm. This subunit acts as a catalytic chaperone that increases the ATP-binding affinity of the ATP-hydrolyzing subunit KdpB by the formation of a transient KdpB/KdpC/ATP ternary complex. This Bacillus cereus (strain Q1) protein is Potassium-transporting ATPase KdpC subunit.